A 203-amino-acid chain; its full sequence is MRYTGPKVRLSRRAGVPLTRKAVKYFEKRPYPPGEHGRRVRRSTSDYAVRQAEKQKLRWYYDLSEKQLARVYENAKKRPGRTGEEMIAELELRLATVLLRAGFAASIYAARQFINHGHITVDGKKVDIPSYQVKPGQIVSVREKSRKLVPFIEAAEGVHADEKIASYLAVSHKDLTIAVVDRPKREQVPVPFDEQLVVEYYAR.

The S4 RNA-binding domain maps to 92–152 (LRLATVLLRA…EKSRKLVPFI (61 aa)).

This sequence belongs to the universal ribosomal protein uS4 family. Part of the 30S ribosomal subunit. Contacts protein S5. The interaction surface between S4 and S5 is involved in control of translational fidelity.

In terms of biological role, one of the primary rRNA binding proteins, it binds directly to 16S rRNA where it nucleates assembly of the body of the 30S subunit. With S5 and S12 plays an important role in translational accuracy. In Thermobifida fusca (strain YX), this protein is Small ribosomal subunit protein uS4.